Here is a 404-residue protein sequence, read N- to C-terminus: uncharacterized protein (404 aa).

12 helical membrane passes run 16–36 (FAFFAAGFNTFAILYCVQPLM), 49–69 (AASLSLSVTTMLLAVSMLVFG), 79–99 (PIMGISMLAASVLCLASAFSP), 110–130 (IQGVALAGLPSIAMAYLGEEI), 133–153 (GSLGSAMGLYISGNAIGAVFG), 166–186 (WHMAMGTIGVISLIASVIFFI), 221–241 (FLIGFLLLGSNVALFNYIVYV), 252–272 (AFSSWIFIVMIVGIFSSSFIG), 283–303 (ILVMNIFIVIAGALFTINNML), 307–327 (ILGIALFTFGFFGGHSVASSW), 342–362 (LYLFFYYAGSSVFGTIGGLFW), and 364–384 (GFHWLGVVGMITFMLLVALWL).

The protein belongs to the major facilitator superfamily.

It is found in the cell membrane. This is an uncharacterized protein from Bacillus subtilis (strain 168).